A 402-amino-acid polypeptide reads, in one-letter code: Glutamate N-acetyltransferase (402 aa).

The substrate site is built by T146, K172, T185, E267, N397, and T402. T185 serves as the catalytic Nucleophile.

It belongs to the ArgJ family. In terms of assembly, heterotetramer of two alpha and two beta chains.

The protein localises to the cytoplasm. It catalyses the reaction N(2)-acetyl-L-ornithine + L-glutamate = N-acetyl-L-glutamate + L-ornithine. The protein operates within amino-acid biosynthesis; L-arginine biosynthesis; L-ornithine and N-acetyl-L-glutamate from L-glutamate and N(2)-acetyl-L-ornithine (cyclic): step 1/1. Its activity is regulated as follows. Competitively inhibited by L-ornithine. Its function is as follows. Catalyzes the transfer of the acetyl group from N(2)-acetylornithine to glutamate, forming N-acetylglutamate and L-ornithine. The sequence is that of Glutamate N-acetyltransferase from Methanocaldococcus jannaschii (strain ATCC 43067 / DSM 2661 / JAL-1 / JCM 10045 / NBRC 100440) (Methanococcus jannaschii).